A 278-amino-acid chain; its full sequence is UPF0276 protein Swit_4400 (278 aa).

Belongs to the UPF0276 family.

This is UPF0276 protein Swit_4400 from Rhizorhabdus wittichii (strain DSM 6014 / CCUG 31198 / JCM 15750 / NBRC 105917 / EY 4224 / RW1) (Sphingomonas wittichii).